Here is a 294-residue protein sequence, read N- to C-terminus: Elongation factor Ts (294 aa).

Residues 79–82 (TDFV) are involved in Mg(2+) ion dislocation from EF-Tu.

This sequence belongs to the EF-Ts family.

It localises to the cytoplasm. Functionally, associates with the EF-Tu.GDP complex and induces the exchange of GDP to GTP. It remains bound to the aminoacyl-tRNA.EF-Tu.GTP complex up to the GTP hydrolysis stage on the ribosome. The protein is Elongation factor Ts (tsf) of Geobacillus kaustophilus (strain HTA426).